The chain runs to 1373 residues: DNA-directed RNA polymerase subunit beta (1373 aa).

Belongs to the RNA polymerase beta chain family. The RNAP catalytic core consists of 2 alpha, 1 beta, 1 beta' and 1 omega subunit. When a sigma factor is associated with the core the holoenzyme is formed, which can initiate transcription.

The catalysed reaction is RNA(n) + a ribonucleoside 5'-triphosphate = RNA(n+1) + diphosphate. In terms of biological role, DNA-dependent RNA polymerase catalyzes the transcription of DNA into RNA using the four ribonucleoside triphosphates as substrates. This Rickettsia conorii (strain ATCC VR-613 / Malish 7) protein is DNA-directed RNA polymerase subunit beta.